The chain runs to 1302 residues: 1-phosphatidylinositol 4,5-bisphosphate phosphodiesterase gamma-1 (1302 aa).

N-acetylalanine is present on Ala-2. Residues Arg-27–Glu-142 enclose the PH 1 domain. One can recognise an EF-hand domain in the interval Gln-152–Arg-187. Asp-165, Asn-167, Glu-169, Arg-171, and Asp-176 together coordinate Ca(2+). The region spanning Asp-320 to Lys-464 is the PI-PLC X-box domain. Catalysis depends on residues His-335 and His-380. Positions Ser-489–Thr-523 constitute a PH 2; first part domain. Tyr-506 carries the post-translational modification Phosphotyrosine. The interval Glu-522–His-545 is disordered. SH2 domains follow at residues Trp-550–Val-657 and Trp-668–Ile-756. The residue at position 771 (Tyr-771) is a Phosphotyrosine; by SYK. Tyr-775 is subject to Phosphotyrosine. Tyr-783 is modified (phosphotyrosine; by ITK, SYK and TXK). The SH3 domain occupies Thr-791 to Asn-851. Residues Phe-895 to Gln-931 enclose the PH 2; second part domain. Positions Leu-953–Arg-1070 constitute a PI-PLC Y-box domain. Tyr-977 carries the phosphotyrosine modification. The region spanning Asp-1071 to Asn-1194 is the C2 domain. Residues Ser-1221, Ser-1227, Ser-1233, and Ser-1248 each carry the phosphoserine modification. Tyr-1253 carries the phosphotyrosine modification. The residue at position 1263 (Ser-1263) is a Phosphoserine.

In terms of assembly, interacts (via SH2 domain) with FGFR1, FGFR2, FGFR3 and FGFR4 (phosphorylated). Interacts with RALGPS1. Interacts (via SH2 domains) with VIL1 (phosphorylated at C-terminus tyrosine phosphorylation sites). Interacts (via SH2 domain) with RET. Interacts with AGAP2 via its SH3 domain. Interacts with LAT (phosphorylated) upon TCR activation. Interacts (via SH3 domain) with the Pro-rich domain of TNK1. Associates with BLNK, VAV1, GRB2 and NCK1 in a B-cell antigen receptor-dependent fashion. Interacts with CBLB in activated T-cells; which inhibits phosphorylation. Interacts with SHB. Interacts (via SH3 domain) with the Arg/Gly-rich-flanked Pro-rich domains of KHDRBS1/SAM68. This interaction is selectively regulated by arginine methylation of KHDRBS1/SAM68. Interacts with INPP5D/SHIP1, THEMIS and CLNK. Interacts with FLT4 and KIT. Interacts with AXL. Interacts with SYK; activates PLCG1. Interacts with FLT1 (tyrosine-phosphorylated). Interacts (via SH2 domain) with PDGFRA and PDGFRB (tyrosine phosphorylated). Interacts with PIP5K1C. Interacts with NTRK1 and NTRK2 (phosphorylated upon ligand-binding). Interacts with TESPA1. Interacts with GRB2, LAT and THEMIS upon TCR activation in thymocytes; the association is weaker in the absence of TESPA1. Interacts (via C-terminal proline-rich domain (PRD)) with PLCG1 (via SH3 domain); this interaction leads to guanine nucleotide exchange from PlCG1 to DNM1 and enhances DNM1-dependent endocytosis. The cofactor is Ca(2+). Post-translationally, tyrosine phosphorylated in response to signaling via activated FLT3, KIT and PDGFRA. Tyrosine phosphorylated by activated FGFR1, FGFR2, FGFR3 and FGFR4. Tyrosine phosphorylated by activated FLT1 and KDR. Tyrosine phosphorylated by activated PDGFRB. The receptor-mediated activation of PLCG1 involves its phosphorylation by tyrosine kinases in response to ligation of a variety of growth factor receptors and immune system receptors. For instance, SYK phosphorylates and activates PLCG1 in response to ligation of the B-cell receptor. Phosphorylated by ITK and TXK on Tyr-783 upon TCR activation in T-cells. May be dephosphorylated by PTPRJ. Ubiquitinated by CBLB in activated T-cells.

The protein resides in the cell projection. It is found in the lamellipodium. It localises to the ruffle. It carries out the reaction a 1,2-diacyl-sn-glycero-3-phospho-(1D-myo-inositol-4,5-bisphosphate) + H2O = 1D-myo-inositol 1,4,5-trisphosphate + a 1,2-diacyl-sn-glycerol + H(+). The enzyme catalyses a 1,2-diacyl-sn-glycero-3-phospho-(1D-myo-inositol) + H2O = 1D-myo-inositol 1-phosphate + a 1,2-diacyl-sn-glycerol + H(+). Its activity is regulated as follows. Activated by phosphorylation on tyrosine residues. In terms of biological role, mediates the production of the second messenger molecules diacylglycerol (DAG) and inositol 1,4,5-trisphosphate (IP3). Plays an important role in the regulation of intracellular signaling cascades. Becomes activated in response to ligand-mediated activation of receptor-type tyrosine kinases, such as PDGFRA, PDGFRB, EGFR, FGFR1, FGFR2, FGFR3 and FGFR4. Plays a role in actin reorganization and cell migration. Guanine nucleotide exchange factor that binds the GTPase DNM1 and catalyzes the dissociation of GDP, allowing a GTP molecule to bind in its place, therefore enhancing DNM1-dependent endocytosis. This is 1-phosphatidylinositol 4,5-bisphosphate phosphodiesterase gamma-1 from Mus musculus (Mouse).